A 297-amino-acid chain; its full sequence is Ribosomal RNA small subunit methyltransferase H (297 aa).

Residues 37 to 39 (GGH), Glu56, Phe87, Asp102, and His109 each bind S-adenosyl-L-methionine.

It belongs to the methyltransferase superfamily. RsmH family.

It localises to the cytoplasm. It catalyses the reaction cytidine(1402) in 16S rRNA + S-adenosyl-L-methionine = N(4)-methylcytidine(1402) in 16S rRNA + S-adenosyl-L-homocysteine + H(+). Specifically methylates the N4 position of cytidine in position 1402 (C1402) of 16S rRNA. This Borrelia hermsii (strain HS1 / DAH) protein is Ribosomal RNA small subunit methyltransferase H.